We begin with the raw amino-acid sequence, 365 residues long: Iron-sulfur cluster assembly protein SufC (365 aa).

In terms of domain architecture, ABC transporter spans Leu-118–Glu-364. ATP is bound at residue Gly-152–Ser-159.

The protein belongs to the ABC transporter superfamily. Ycf16 family. As to quaternary structure, component of a complex composed of SufB, SufC and SufD in a stoichiometric ratio of 1:2:1. Interacts with SufB. Interacts with SufD; the interaction enhances the ATPase activity of SufC.

The protein resides in the plastid. It is found in the apicoplast. The enzyme catalyses ATP + H2O = ADP + phosphate + H(+). The protein operates within cofactor biosynthesis; iron-sulfur cluster biosynthesis. Its function is as follows. Participates in the sulfur mobilization (SUF) pathway for iron-sulfur (Fe-S) cluster biogenesis. As part of a complex consisting of SufB-SufC(2)-SufD, involved in assembly of [4Fe-4S] clusters. Exhibits ATPase activity. The sequence is that of Iron-sulfur cluster assembly protein SufC from Plasmodium berghei (strain Anka).